Reading from the N-terminus, the 475-residue chain is Ribulose bisphosphate carboxylase large chain (475 aa).

A propeptide spanning residues 1–2 (MS) is cleaved from the precursor. At Pro-3 the chain carries N-acetylproline. Position 14 is an N6,N6,N6-trimethyllysine (Lys-14). Residues Asn-123 and Thr-173 each coordinate substrate. Catalysis depends on Lys-175, which acts as the Proton acceptor. Substrate is bound at residue Lys-177. Lys-201, Asp-203, and Glu-204 together coordinate Mg(2+). N6-carboxylysine is present on Lys-201. His-294 (proton acceptor) is an active-site residue. Residues Arg-295, His-327, and Ser-379 each contribute to the substrate site.

This sequence belongs to the RuBisCO large chain family. Type I subfamily. As to quaternary structure, heterohexadecamer of 8 large chains and 8 small chains; disulfide-linked. The disulfide link is formed within the large subunit homodimers. It depends on Mg(2+) as a cofactor. In terms of processing, the disulfide bond which can form in the large chain dimeric partners within the hexadecamer appears to be associated with oxidative stress and protein turnover.

Its subcellular location is the plastid. The protein resides in the chloroplast. The enzyme catalyses 2 (2R)-3-phosphoglycerate + 2 H(+) = D-ribulose 1,5-bisphosphate + CO2 + H2O. It carries out the reaction D-ribulose 1,5-bisphosphate + O2 = 2-phosphoglycolate + (2R)-3-phosphoglycerate + 2 H(+). RuBisCO catalyzes two reactions: the carboxylation of D-ribulose 1,5-bisphosphate, the primary event in carbon dioxide fixation, as well as the oxidative fragmentation of the pentose substrate in the photorespiration process. Both reactions occur simultaneously and in competition at the same active site. The protein is Ribulose bisphosphate carboxylase large chain of Cerastium glomeratum (Sticky chickweed).